We begin with the raw amino-acid sequence, 718 residues long: Quinohemoprotein alcohol dehydrogenase ADH-IIG (718 aa).

The N-terminal stretch at 1–29 is a signal peptide; sequence MRQTGLASLPLKSLAVAVLLSLAGTPALA. Position 92 (E92) interacts with pyrroloquinoline quinone. C138 and C139 form a disulfide bridge. Pyrroloquinoline quinone-binding positions include R144, T189, and 205–206; that span reads GA. E207 contacts Ca(2+). T264 serves as a coordination point for pyrroloquinoline quinone. Positions 284 and 329 each coordinate Ca(2+). D329 (proton acceptor) is an active-site residue. K356 lines the pyrroloquinoline quinone pocket. W415 serves as a coordination point for substrate. Residues 419–420 and A571 contribute to the pyrroloquinoline quinone site; that span reads DW. Residues 622–699 form the Cytochrome c domain; that stretch reads ASIEAGAKLY…QIHQYLIKRA (78 aa). Residues C635, C638, H639, and M676 each contribute to the heme c site.

Belongs to the bacterial PQQ dehydrogenase family. As to quaternary structure, monomer. It depends on pyrroloquinoline quinone as a cofactor. Requires Ca(2+) as cofactor. Heme c serves as cofactor.

It is found in the periplasm. It catalyses the reaction 2 oxidized [azurin] + a primary alcohol = 2 reduced [azurin] + an aldehyde + 2 H(+). Its activity is regulated as follows. Exhibits higher affinity for 1-butanol compared to 1,2-propanediol but inhibited by 10 mM 1-butanol. Catalyzes the dye-linked oxidation of primary alcohols to the corresponding aldehydes and the (subsequent) oxidation of the aldehydes to carboxylic acids. Active with primary alcohols, glycerol, 1,2-propanediol, 1,3-propanediol but not with methanol or sugar alcohols such as D-sorbitol. This Pseudomonas putida (Arthrobacter siderocapsulatus) protein is Quinohemoprotein alcohol dehydrogenase ADH-IIG.